The sequence spans 833 residues: Glycerol-3-phosphate acyltransferase (833 aa).

Residues 310-315 (HRSHID) carry the HXXXXD motif motif.

This sequence belongs to the GPAT/DAPAT family.

It localises to the cell inner membrane. It catalyses the reaction sn-glycerol 3-phosphate + an acyl-CoA = a 1-acyl-sn-glycero-3-phosphate + CoA. It participates in phospholipid metabolism; CDP-diacylglycerol biosynthesis; CDP-diacylglycerol from sn-glycerol 3-phosphate: step 1/3. The chain is Glycerol-3-phosphate acyltransferase from Pseudomonas syringae pv. tomato (strain ATCC BAA-871 / DC3000).